Reading from the N-terminus, the 494-residue chain is MPLLMDGLAYAGAIWSLIVFCVQAIGLYQLFRSYSRPPPPPVSPSLTSEDVPHVTVIRPVKGLEPRLYECLISTLQQSYPRDKLSVHLCISSKEDPAYPVLKKVVVEYSATHDVRLFVETEDPLLYGTTGDTRNLGPNPKIRNISHAYREAKGDIIWIIDCNIWVSKGTAGRMVDKLCGFPAGSRPYKFVHQLPLSVDVTPPQDSGVLRTGGGRLDEMFMATTHGKFYSAINTVGVAPCICGKSNMFRKSHLDRLTDPAHNPILPKETATRPRGIDYFSAYICEDHLIGDLLWRSQVPGHGNHGLVFGDLALQPMMNNSVGSYIARRVRWLRVRKWTVLLATLVEPGVESMVCCMAFAHALTTTPWCPNPADWPIPHTWTALWSIWLAAIAVWATLDYVVYHFLHSCRSIEKDADSPDFAQGNELMKRPFGAWILAWIGREILALPIWTRAVLLGTTVTWRGTKFKVRPDQSVVDIPNAGAKSNGIGSTNRKVR.

Over 1–6 (MPLLMD) the chain is Lumenal. The helical transmembrane segment at 7 to 27 (GLAYAGAIWSLIVFCVQAIGL) threads the bilayer. Over 28–337 (YQLFRSYSRP…VRWLRVRKWT (310 aa)) the chain is Cytoplasmic. A short sequence motif (D1) is located at residue Asp-95. Position 160 (Asp-160) is a short sequence motif, D2. Asp-285 is a short sequence motif (D3). Residue Asp-285 is the Proton acceptor of the active site. A (Q/R)XXRW motif is present at residues 326–330 (RRVRW). A helical membrane pass occupies residues 338-358 (VLLATLVEPGVESMVCCMAFA). Over 359-380 (HALTTTPWCPNPADWPIPHTWT) the chain is Lumenal. The chain crosses the membrane as a helical span at residues 381 to 401 (ALWSIWLAAIAVWATLDYVVY). Residues 402–428 (HFLHSCRSIEKDADSPDFAQGNELMKR) lie on the Cytoplasmic side of the membrane. The helical transmembrane segment at 429-449 (PFGAWILAWIGREILALPIWT) threads the bilayer. Residues 450–494 (RAVLLGTTVTWRGTKFKVRPDQSVVDIPNAGAKSNGIGSTNRKVR) are Lumenal-facing.

This sequence belongs to the glycosyltransferase 2 family.

It is found in the golgi apparatus membrane. The catalysed reaction is an N-acylsphing-4-enine + UDP-alpha-D-glucose = a beta-D-glucosyl-(1&lt;-&gt;1')-N-acylsphing-4-enine + UDP + H(+). The protein operates within lipid metabolism; sphingolipid metabolism. Catalyzes the final step in the biosynthesis of the membrane lipid glucosylceramide (GluCer), the transfer of glucose to ceramide. Glucosylceramides play important roles in growth, differentiation and pathogenicity. The protein is Ceramide glucosyltransferase of Pyricularia oryzae (strain 70-15 / ATCC MYA-4617 / FGSC 8958) (Rice blast fungus).